Reading from the N-terminus, the 455-residue chain is Asparagine--tRNA ligase (455 aa).

This sequence belongs to the class-II aminoacyl-tRNA synthetase family. Homodimer.

It localises to the cytoplasm. It carries out the reaction tRNA(Asn) + L-asparagine + ATP = L-asparaginyl-tRNA(Asn) + AMP + diphosphate + H(+). This is Asparagine--tRNA ligase from Mycoplasma pneumoniae (strain ATCC 29342 / M129 / Subtype 1) (Mycoplasmoides pneumoniae).